The chain runs to 302 residues: tRNA dimethylallyltransferase 1 (302 aa).

Residue 6–13 (GPTACGKT) coordinates ATP. 8 to 13 (TACGKT) is a binding site for substrate. 2 interaction with substrate tRNA regions span residues 31–34 (DSRQ) and 154–158 (QRAIR).

Belongs to the IPP transferase family. As to quaternary structure, monomer. The cofactor is Mg(2+).

It catalyses the reaction adenosine(37) in tRNA + dimethylallyl diphosphate = N(6)-dimethylallyladenosine(37) in tRNA + diphosphate. Functionally, catalyzes the transfer of a dimethylallyl group onto the adenine at position 37 in tRNAs that read codons beginning with uridine, leading to the formation of N6-(dimethylallyl)adenosine (i(6)A). This chain is tRNA dimethylallyltransferase 1, found in Porphyromonas gingivalis (strain ATCC 33277 / DSM 20709 / CIP 103683 / JCM 12257 / NCTC 11834 / 2561).